Reading from the N-terminus, the 115-residue chain is uncharacterized protein (115 aa).

Residues 1 to 115 (MGETWFLTPN…ARSPERTPSP (115 aa)) are disordered. Over residues 7–17 (LTPNGQSSPGS) the composition is skewed to polar residues. Composition is skewed to low complexity over residues 60-70 (ASCAPRATPRR) and 91-107 (SASA…WPAR).

This is an uncharacterized protein from Human adenovirus C serotype 2 (HAdV-2).